A 176-amino-acid polypeptide reads, in one-letter code: Inner membrane-spanning protein YciB (176 aa).

6 consecutive transmembrane segments (helical) span residues 3–23, 24–44, 49–69, 81–101, 121–141, and 149–169; these read FLFD…WGIF, TATA…AFRH, TMLW…LVLH, LYWL…NNLI, VAWA…VHNF, and FKLF…SLWL.

Belongs to the YciB family.

It localises to the cell inner membrane. Plays a role in cell envelope biogenesis, maintenance of cell envelope integrity and membrane homeostasis. This Burkholderia lata (strain ATCC 17760 / DSM 23089 / LMG 22485 / NCIMB 9086 / R18194 / 383) protein is Inner membrane-spanning protein YciB.